Reading from the N-terminus, the 412-residue chain is Kelch repeat-containing protein At1g19470 (412 aa).

Positions 1–55 (MVNISEIPDDSNDGCDPNKKPEEQVLRRSRRIATRNENQNKKPKEEEEEDNRSVS) are disordered. Residues 16 to 26 (DPNKKPEEQVL) are compositionally biased toward basic and acidic residues. Kelch repeat units follow at residues 156-202 (EMYV…VVDG), 203-250 (KIYV…SAHA), 255-291 (KLYMLGSKFCLVYEPKRNGEWDASVGATPLKDLWDKT), and 292-345 (CCVV…EMAN).

The chain is Kelch repeat-containing protein At1g19470 from Arabidopsis thaliana (Mouse-ear cress).